Here is a 116-residue protein sequence, read N- to C-terminus: Large ribosomal subunit protein bL20 (116 aa).

It belongs to the bacterial ribosomal protein bL20 family.

Its function is as follows. Binds directly to 23S ribosomal RNA and is necessary for the in vitro assembly process of the 50S ribosomal subunit. It is not involved in the protein synthesizing functions of that subunit. The protein is Large ribosomal subunit protein bL20 of Helicobacter pylori (strain HPAG1).